The primary structure comprises 330 residues: Lipoyl synthase (330 aa).

The [4Fe-4S] cluster site is built by cysteine 77, cysteine 82, cysteine 88, cysteine 103, cysteine 107, cysteine 110, and serine 317. The 218-residue stretch at 89–306 folds into the Radical SAM core domain; it reads FNHGTATFMI…RSEAEKMGFE (218 aa).

This sequence belongs to the radical SAM superfamily. Lipoyl synthase family. Requires [4Fe-4S] cluster as cofactor.

It is found in the cytoplasm. It carries out the reaction [[Fe-S] cluster scaffold protein carrying a second [4Fe-4S](2+) cluster] + N(6)-octanoyl-L-lysyl-[protein] + 2 oxidized [2Fe-2S]-[ferredoxin] + 2 S-adenosyl-L-methionine + 4 H(+) = [[Fe-S] cluster scaffold protein] + N(6)-[(R)-dihydrolipoyl]-L-lysyl-[protein] + 4 Fe(3+) + 2 hydrogen sulfide + 2 5'-deoxyadenosine + 2 L-methionine + 2 reduced [2Fe-2S]-[ferredoxin]. It participates in protein modification; protein lipoylation via endogenous pathway; protein N(6)-(lipoyl)lysine from octanoyl-[acyl-carrier-protein]: step 2/2. Functionally, catalyzes the radical-mediated insertion of two sulfur atoms into the C-6 and C-8 positions of the octanoyl moiety bound to the lipoyl domains of lipoate-dependent enzymes, thereby converting the octanoylated domains into lipoylated derivatives. The polypeptide is Lipoyl synthase (Haemophilus ducreyi (strain 35000HP / ATCC 700724)).